Here is a 418-residue protein sequence, read N- to C-terminus: UDP-N-acetylglucosamine 1-carboxyvinyltransferase (418 aa).

Residue 22-23 (KN) coordinates phosphoenolpyruvate. Arg-92 provides a ligand contact to UDP-N-acetyl-alpha-D-glucosamine. Cys-116 serves as the catalytic Proton donor. The residue at position 116 (Cys-116) is a 2-(S-cysteinyl)pyruvic acid O-phosphothioketal. UDP-N-acetyl-alpha-D-glucosamine contacts are provided by residues 121–125 (RPIDL), Asp-305, and Leu-327.

This sequence belongs to the EPSP synthase family. MurA subfamily.

It localises to the cytoplasm. It carries out the reaction phosphoenolpyruvate + UDP-N-acetyl-alpha-D-glucosamine = UDP-N-acetyl-3-O-(1-carboxyvinyl)-alpha-D-glucosamine + phosphate. It participates in cell wall biogenesis; peptidoglycan biosynthesis. In terms of biological role, cell wall formation. Adds enolpyruvyl to UDP-N-acetylglucosamine. The protein is UDP-N-acetylglucosamine 1-carboxyvinyltransferase of Campylobacter jejuni (strain RM1221).